Reading from the N-terminus, the 98-residue chain is Integration host factor subunit alpha (98 aa).

The segment at 49–71 (FGNFDLRDKNQRPGRNPKTGEDI) is disordered.

It belongs to the bacterial histone-like protein family. Heterodimer of an alpha and a beta chain.

Its function is as follows. This protein is one of the two subunits of integration host factor, a specific DNA-binding protein that functions in genetic recombination as well as in transcriptional and translational control. This chain is Integration host factor subunit alpha, found in Shewanella amazonensis (strain ATCC BAA-1098 / SB2B).